We begin with the raw amino-acid sequence, 181 residues long: Acireductone dioxygenase (181 aa).

Fe(2+) is bound by residues His97, His99, Glu103, and His141. The Ni(2+) site is built by His97, His99, Glu103, and His141.

The protein belongs to the acireductone dioxygenase (ARD) family. As to quaternary structure, monomer. It depends on Fe(2+) as a cofactor. The cofactor is Ni(2+).

The enzyme catalyses 1,2-dihydroxy-5-(methylsulfanyl)pent-1-en-3-one + O2 = 3-(methylsulfanyl)propanoate + CO + formate + 2 H(+). The catalysed reaction is 1,2-dihydroxy-5-(methylsulfanyl)pent-1-en-3-one + O2 = 4-methylsulfanyl-2-oxobutanoate + formate + 2 H(+). The protein operates within amino-acid biosynthesis; L-methionine biosynthesis via salvage pathway; L-methionine from S-methyl-5-thio-alpha-D-ribose 1-phosphate: step 5/6. Its function is as follows. Catalyzes 2 different reactions between oxygen and the acireductone 1,2-dihydroxy-3-keto-5-methylthiopentene (DHK-MTPene) depending upon the metal bound in the active site. Fe-containing acireductone dioxygenase (Fe-ARD) produces formate and 2-keto-4-methylthiobutyrate (KMTB), the alpha-ketoacid precursor of methionine in the methionine recycle pathway. Ni-containing acireductone dioxygenase (Ni-ARD) produces methylthiopropionate, carbon monoxide and formate, and does not lie on the methionine recycle pathway. In Pseudomonas paraeruginosa (strain DSM 24068 / PA7) (Pseudomonas aeruginosa (strain PA7)), this protein is Acireductone dioxygenase.